A 290-amino-acid polypeptide reads, in one-letter code: L-proline cis-3-hydroxylase 1 (290 aa).

Histidine 107, aspartate 109, and histidine 158 together coordinate Fe cation. Arginine 168 lines the 2-oxoglutarate pocket.

The protein belongs to the L-proline cis-4-/cis-3-hydroxylase family. Homodimer. Fe(2+) is required as a cofactor.

The catalysed reaction is L-proline + 2-oxoglutarate + O2 = cis-3-hydroxy-L-proline + succinate + CO2. Its activity is regulated as follows. Inhibited by metal ions such as Co(2+), Zn(2+), Ni(2+) or Cu(2+). Is also inhibited by EDTA in vitro. Unlike the procollagen-proline cis-3- and trans-4-hydroxylases from mammals, does not necessarily require L-ascorbate for activity although it does increase the activity of the enzyme. Dioxygenase that catalyzes the 2-oxoglutarate-dependent selective hydroxylation of free L-proline to cis-3-hydroxy-L-proline (cis-3-Hyp). D-proline, trans-4-hydroxy-L-proline, cis-4-hydroxy-L-proline, cis-4-hydroxy-D-proline, and 3,4-dehydro-DL-proline are not substrates. This is L-proline cis-3-hydroxylase 1 from Streptomyces sp.